Consider the following 90-residue polypeptide: Small ribosomal subunit protein bS18 (90 aa).

Over residues 1 to 14 (MARDNGNKDRDGKR) the composition is skewed to basic and acidic residues. The segment at 1–23 (MARDNGNKDRDGKRPNGGRNRKM) is disordered.

It belongs to the bacterial ribosomal protein bS18 family. Part of the 30S ribosomal subunit. Forms a tight heterodimer with protein bS6.

Functionally, binds as a heterodimer with protein bS6 to the central domain of the 16S rRNA, where it helps stabilize the platform of the 30S subunit. In Clostridium acetobutylicum (strain ATCC 824 / DSM 792 / JCM 1419 / IAM 19013 / LMG 5710 / NBRC 13948 / NRRL B-527 / VKM B-1787 / 2291 / W), this protein is Small ribosomal subunit protein bS18.